The following is an 82-amino-acid chain: RNA-binding protein GWCH70_0105 (82 aa).

Belongs to the eukaryotic ribosomal protein eL8 family.

This chain is RNA-binding protein GWCH70_0105, found in Geobacillus sp. (strain WCH70).